Consider the following 513-residue polypeptide: MHFARVVKSIHSVYSLPMCDTQIVVDTEKIRKAIELQLPIAITTYTLPRDMDIYIGQVAKTILDLIGQPHVKDYLTYCISELTTNAKKANTKRIYFREKGLDIFDPQDYKRGMKSFKEESLENINHYLKLQQQEGLYVKVTMQVLSHALVIEVINNCKMTPMEFKRVFDKRVRARRYSGLEEALAHILDNSEGAGLGLVIMMLMLKKLGLEEDVYRLVVEEDRTISRMVVPRNIEIQTQTTKLAASIADRIDDIPQLPSKLLEIQRAIENPDVQLSDIVALISQDVALVTDLLKLVNSARFGMNKRCLDISEAVKRVGLRGLQNLLYSVGAGRVLQSTDDERKQLWNQAYRTGYFALGLAKATGDQALIADSYICGLLHNLGEVVFTSAYPEMLIKLTEIQAERNIPPHVLDTIMSDVGHAEIGAALAQRWNLPEPVINTIRFHHNLPHAPEEYKPLISTVAFANMTIRFLDGETPYEQIPRSLLSFFRIQSEQQLRTTAQTLQSSFEAEQTA.

The HDOD domain occupies 254-447; the sequence is IPQLPSKLLE…INTIRFHHNL (194 aa).

This is an uncharacterized protein from Treponema pallidum (strain Nichols).